Reading from the N-terminus, the 490-residue chain is Cytochrome P450 71A21 (490 aa).

A helical transmembrane segment spans residues 1 to 21 (MESMTMIILQSLIIFITILFF). Residue cysteine 432 participates in heme binding.

It belongs to the cytochrome P450 family. The cofactor is heme.

The protein localises to the membrane. The chain is Cytochrome P450 71A21 (CYP71A21) from Arabidopsis thaliana (Mouse-ear cress).